The following is a 387-amino-acid chain: Migration and invasion-inhibitory protein (387 aa).

Positions 50–59 (NLEMPLSQET) are enriched in polar residues. Disordered stretches follow at residues 50-80 (NLEMPLSQETSSASSVAPSSQDKRHMLDPLD) and 133-172 (VSLGGPKGLGPDKTQVPRSILSRLSKPSKPRVTSQESAVP). The span at 60–69 (SSASSVAPSS) shows a compositional bias: low complexity. A compositionally biased stretch (basic and acidic residues) spans 70 to 80 (QDKRHMLDPLD). Serine 307 bears the Phosphoserine mark.

As to quaternary structure, interacts with IGFBP2.

Inhibits glioma cells invasion and down-regulates adhesion- and motility-associated genes such as NFKB2 and ICAM1. Exhibits opposing effects to IGFBP2 on cell invasion. This is Migration and invasion-inhibitory protein (Miip) from Mus musculus (Mouse).